We begin with the raw amino-acid sequence, 473 residues long: Ribulose bisphosphate carboxylase large chain 2 (473 aa).

Substrate-binding residues include Asn116 and Thr166. Lys168 functions as the Proton acceptor in the catalytic mechanism. Lys170 lines the substrate pocket. Positions 194, 196, and 197 each coordinate Mg(2+). Lys194 carries the N6-carboxylysine modification. His287 serves as the catalytic Proton acceptor. The substrate site is built by Arg288, His320, and Ser372.

It belongs to the RuBisCO large chain family. Type I subfamily. In terms of assembly, heterohexadecamer of 8 large chains and 8 small chains. Mg(2+) serves as cofactor.

It catalyses the reaction 2 (2R)-3-phosphoglycerate + 2 H(+) = D-ribulose 1,5-bisphosphate + CO2 + H2O. The catalysed reaction is D-ribulose 1,5-bisphosphate + O2 = 2-phosphoglycolate + (2R)-3-phosphoglycerate + 2 H(+). Its function is as follows. RuBisCO catalyzes two reactions: the carboxylation of D-ribulose 1,5-bisphosphate, the primary event in carbon dioxide fixation, as well as the oxidative fragmentation of the pentose substrate. Both reactions occur simultaneously and in competition at the same active site. The chain is Ribulose bisphosphate carboxylase large chain 2 from Cereibacter sphaeroides (strain ATCC 17025 / ATH 2.4.3) (Rhodobacter sphaeroides).